We begin with the raw amino-acid sequence, 459 residues long: Bifunctional protein GlmU (459 aa).

Residues 1 to 229 (MSNYAIILAA…FDESLGVNDR (229 aa)) form a pyrophosphorylase region. Residues 8–11 (LAAG), Lys-22, Gln-72, and 77–78 (GT) contribute to the UDP-N-acetyl-alpha-D-glucosamine site. Asp-102 contacts Mg(2+). UDP-N-acetyl-alpha-D-glucosamine is bound by residues Gly-139, Glu-154, Asn-169, and Asn-227. Asn-227 lines the Mg(2+) pocket. Residues 230 to 250 (VALATAEKVMRHRIARQHMVN) form a linker region. The interval 251–459 (GVTVVNPDSA…NKKPHHPSQK (209 aa)) is N-acetyltransferase. UDP-N-acetyl-alpha-D-glucosamine contacts are provided by Arg-332 and Lys-350. The Proton acceptor role is filled by His-362. UDP-N-acetyl-alpha-D-glucosamine contacts are provided by Tyr-365 and Asn-376. Residues Ala-379, 385-386 (NY), Ser-404, Ala-422, and Arg-439 each bind acetyl-CoA.

The protein in the N-terminal section; belongs to the N-acetylglucosamine-1-phosphate uridyltransferase family. This sequence in the C-terminal section; belongs to the transferase hexapeptide repeat family. As to quaternary structure, homotrimer. Requires Mg(2+) as cofactor.

Its subcellular location is the cytoplasm. It carries out the reaction alpha-D-glucosamine 1-phosphate + acetyl-CoA = N-acetyl-alpha-D-glucosamine 1-phosphate + CoA + H(+). It catalyses the reaction N-acetyl-alpha-D-glucosamine 1-phosphate + UTP + H(+) = UDP-N-acetyl-alpha-D-glucosamine + diphosphate. It functions in the pathway nucleotide-sugar biosynthesis; UDP-N-acetyl-alpha-D-glucosamine biosynthesis; N-acetyl-alpha-D-glucosamine 1-phosphate from alpha-D-glucosamine 6-phosphate (route II): step 2/2. It participates in nucleotide-sugar biosynthesis; UDP-N-acetyl-alpha-D-glucosamine biosynthesis; UDP-N-acetyl-alpha-D-glucosamine from N-acetyl-alpha-D-glucosamine 1-phosphate: step 1/1. The protein operates within bacterial outer membrane biogenesis; LPS lipid A biosynthesis. Catalyzes the last two sequential reactions in the de novo biosynthetic pathway for UDP-N-acetylglucosamine (UDP-GlcNAc). The C-terminal domain catalyzes the transfer of acetyl group from acetyl coenzyme A to glucosamine-1-phosphate (GlcN-1-P) to produce N-acetylglucosamine-1-phosphate (GlcNAc-1-P), which is converted into UDP-GlcNAc by the transfer of uridine 5-monophosphate (from uridine 5-triphosphate), a reaction catalyzed by the N-terminal domain. The sequence is that of Bifunctional protein GlmU from Streptococcus agalactiae serotype V (strain ATCC BAA-611 / 2603 V/R).